The primary structure comprises 153 residues: Zinc finger protein GIS2 (153 aa).

CCHC-type zinc fingers lie at residues K4–S21, R23–M40, K47–V64, Q65–E82, V92–K109, L116–N133, and R135–K152.

The protein resides in the cytoplasm. Its function is as follows. May act in the sexual differentiation pathway. The chain is Zinc finger protein GIS2 (GIS2) from Saccharomyces cerevisiae (strain ATCC 204508 / S288c) (Baker's yeast).